The primary structure comprises 611 residues: Large ribosomal subunit assembly factor BipA (611 aa).

A tr-type G domain is found at 7–202 (KNLRNIAIIA…AIVKYTPPPT (196 aa)). GTP-binding positions include 19–24 (DHGKTT) and 132–135 (NKID).

This sequence belongs to the TRAFAC class translation factor GTPase superfamily. Classic translation factor GTPase family. BipA subfamily. As to quaternary structure, monomer.

The protein resides in the cytoplasm. It catalyses the reaction GTP + H2O = GDP + phosphate + H(+). Its function is as follows. A 50S ribosomal subunit assembly protein with GTPase activity, required for 50S subunit assembly at low temperatures, may also play a role in translation. Binds GTP and analogs. Binds the 70S ribosome between the 30S and 50S subunits, in a similar position as ribosome-bound EF-G; it contacts a number of ribosomal proteins, both rRNAs and the A-site tRNA. The protein is Large ribosomal subunit assembly factor BipA of Buchnera aphidicola subsp. Baizongia pistaciae (strain Bp).